A 329-amino-acid chain; its full sequence is Synaptonemal complex central element protein 1 (329 aa).

The tract at residues 1–29 (MATRPQPLGMEPEGSADLLHGPEGARGQY) is disordered. Coiled-coil stretches lie at residues 54–167 (RIEV…LETL) and 194–294 (KEQL…ILAH). The segment at 291 to 329 (ILAHSTQNEEDSSWRMASPKPVEVHEETAQDQERPSSRT) is disordered. Residues 312–329 (VEVHEETAQDQERPSSRT) show a composition bias toward basic and acidic residues.

Belongs to the SYCE family. In terms of assembly, homodimer. Found in a complex with SYCP1 and SYCE2. Interacts with SYCP1, SYCE2 and SYCE3. Interacts with SIX6OS1. As to expression, meiotic cells (at protein level). Expressed in the ovary and testis.

It is found in the nucleus. It localises to the chromosome. Functionally, major component of the transverse central element of synaptonemal complexes (SCS), formed between homologous chromosomes during meiotic prophase. Requires SYCP1 in order to be incorporated into the central element. May have a role in the synaptonemal complex assembly, stabilization and recombination. This chain is Synaptonemal complex central element protein 1 (Syce1), found in Mus musculus (Mouse).